A 555-amino-acid chain; its full sequence is Suppressor of tumorigenicity 7 protein-like (555 aa).

Transmembrane regions (helical) follow at residues 36–56 (GLAGTGASLWFVAGLGLLYAL) and 80–100 (FYVALTGTSSLISGLIFIFEW). Residues 126 to 148 (TESSISEPGSPSNNRESETSRQN) form a disordered region.

It belongs to the ST7 family.

It is found in the membrane. The chain is Suppressor of tumorigenicity 7 protein-like (ST7L) from Bos taurus (Bovine).